A 365-amino-acid polypeptide reads, in one-letter code: Snurportin-1 (365 aa).

Residues 10–72 form the IBB domain; that stretch reads GGVALAAPNS…RLAEGDWAGV (63 aa). Disordered regions lie at residues 15–34 and 69–90; these read AAPNSPAAPHPRLSAYKGRG and WAGVESDEDGGEDGDGEEEMEV. The segment covering 73-90 has biased composition (acidic residues); that stretch reads ESDEDGGEDGDGEEEMEV. The interaction with m3G-cap structure stretch occupies residues 129–131; sequence GKR. The segment at 211–333 is necessary for binding to the m3G-cap structure; sequence LSSKIQEEEG…GKAQPSAEAA (123 aa). The tract at residues 317–365 is disordered; the sequence is RSKKLAAGKAQPSAEAAARNGHYELEHLSTPQPANSAQGQEEAGSQMEN. The span at 345–355 shows a compositional bias: polar residues; it reads STPQPANSAQG.

Belongs to the snurportin family.

The protein localises to the nucleus. It localises to the cytoplasm. In terms of biological role, functions as an U snRNP-specific nuclear import adapter. Involved in the trimethylguanosine (m3G)-cap-dependent nuclear import of U snRNPs. Binds specifically to the terminal m3G-cap U snRNAs. This is Snurportin-1 (SNUPN) from Gallus gallus (Chicken).